The sequence spans 53 residues: uncharacterized protein (53 aa).

The chain crosses the membrane as a helical span at residues 24-44 (LMTFIAVNAVLSLILIRAVIL).

The protein localises to the membrane. This is an uncharacterized protein from Methanocaldococcus jannaschii (strain ATCC 43067 / DSM 2661 / JAL-1 / JCM 10045 / NBRC 100440) (Methanococcus jannaschii).